The primary structure comprises 291 residues: Elongation factor Ts (291 aa).

Residues 78–81 form an involved in Mg(2+) ion dislocation from EF-Tu region; the sequence is TDFV.

The protein belongs to the EF-Ts family.

It localises to the cytoplasm. Functionally, associates with the EF-Tu.GDP complex and induces the exchange of GDP to GTP. It remains bound to the aminoacyl-tRNA.EF-Tu.GTP complex up to the GTP hydrolysis stage on the ribosome. The protein is Elongation factor Ts of Ureaplasma parvum serovar 3 (strain ATCC 27815 / 27 / NCTC 11736).